A 481-amino-acid chain; its full sequence is CASP8 and FADD-like apoptosis regulator (481 aa).

DED domains follow at residues 6 to 78 (VSAE…RILK) and 97 to 172 (DYRV…LNTK). The interval 6-200 (VSAEVIHQVE…QASLPKLSIK (195 aa)) is interaction with CASP8. Positions 6–229 (VSAEVIHQVE…DSQRTLVKTS (224 aa)) are interaction with FADD. An interaction with CASP8 propeptide region spans residues 6 to 307 (VSAEVIHQVE…YASMAQHQDY (302 aa)). Residues 197-436 (LSIKYNSRLQ…KLSQQLKQGR (240 aa)) are interaction with CASP3. Positions 197–481 (LSIKYNSRLQ…LRKKLILAPT (285 aa)) are interaction with TRAF1 and TRAF2. The segment at 219–481 (RDSQRTLVKT…LRKKLILAPT (263 aa)) is interaction with CASP8 subunits p18 and p10. Residues 265-360 (DTKYLQETFT…RGKPKLFFIQ (96 aa)) are caspase. The tract at residues 372–481 (SSLEVDGPSI…LRKKLILAPT (110 aa)) is interaction with CASP8.

Belongs to the peptidase C14A family. TNFRSF6 stimulation triggers recruitment to the death-inducing signaling complex (DISC) formed by TNFRSF6, FADD and CASP8. A proteolytic fragment (p43) stays associated with the DISC. Interacts with RIPK1. Proteolytically processed by CASP8 generating subunits p43 and p12. As to expression, highly expressed in heart.

In terms of biological role, apoptosis regulator protein which may function as a crucial link between cell survival and cell death pathways in mammalian cells. Acts as an inhibitor of TNFRSF6 mediated apoptosis. A proteolytic fragment (p43) is likely retained in the death-inducing signaling complex (DISC) thereby blocking further recruitment and processing of caspase-8 at the complex. Full length and shorter isoforms have been shown either to induce apoptosis or to reduce TNFRSF-triggered apoptosis. Lacks enzymatic (caspase) activity. The chain is CASP8 and FADD-like apoptosis regulator (Cflar) from Mus musculus (Mouse).